The primary structure comprises 1025 residues: Multidrug resistance protein MdtC (1025 aa).

The next 12 helical transmembrane spans lie at 3–23 (FFAL…AITL), 333–353 (EVEQ…FLFL), 360–380 (IIPA…MYLC), 387–407 (LSLM…IVVL), 431–451 (VGFT…PLLL), 463–483 (FAVT…TLTP), 528–548 (LVGV…ISIP), 853–873 (VILI…LYES), 875–895 (VHPL…LLAL), 897–917 (LFNA…IGIV), 953–973 (PIMM…LSGG), and 984–1004 (ITIV…TPVV).

It belongs to the resistance-nodulation-cell division (RND) (TC 2.A.6) family. MdtC subfamily. Part of a tripartite efflux system composed of MdtA, MdtB and MdtC. MdtC forms a heteromultimer with MdtB.

It is found in the cell inner membrane. In terms of biological role, the MdtABC tripartite complex confers resistance against novobiocin and deoxycholate. The polypeptide is Multidrug resistance protein MdtC (Escherichia coli (strain K12 / MC4100 / BW2952)).